Consider the following 344-residue polypeptide: tRNA N6-adenosine threonylcarbamoyltransferase (344 aa).

Residues H111 and H115 each contribute to the Fe cation site. Substrate-binding positions include 133-137 (LVSGG), D166, G179, and N283. Residue D311 coordinates Fe cation.

It belongs to the KAE1 / TsaD family. Requires Fe(2+) as cofactor.

The protein resides in the cytoplasm. The catalysed reaction is L-threonylcarbamoyladenylate + adenosine(37) in tRNA = N(6)-L-threonylcarbamoyladenosine(37) in tRNA + AMP + H(+). In terms of biological role, required for the formation of a threonylcarbamoyl group on adenosine at position 37 (t(6)A37) in tRNAs that read codons beginning with adenine. Is involved in the transfer of the threonylcarbamoyl moiety of threonylcarbamoyl-AMP (TC-AMP) to the N6 group of A37, together with TsaE and TsaB. TsaD likely plays a direct catalytic role in this reaction. This Orientia tsutsugamushi (strain Boryong) (Rickettsia tsutsugamushi) protein is tRNA N6-adenosine threonylcarbamoyltransferase.